Consider the following 87-residue polypeptide: Small ribosomal subunit protein bS20 (87 aa).

Belongs to the bacterial ribosomal protein bS20 family.

Functionally, binds directly to 16S ribosomal RNA. This Shigella flexneri serotype 5b (strain 8401) protein is Small ribosomal subunit protein bS20.